The sequence spans 288 residues: ATP synthase gamma chain (288 aa).

This sequence belongs to the ATPase gamma chain family. F-type ATPases have 2 components, CF(1) - the catalytic core - and CF(0) - the membrane proton channel. CF(1) has five subunits: alpha(3), beta(3), gamma(1), delta(1), epsilon(1). CF(0) has three main subunits: a, b and c.

It localises to the cell inner membrane. Its function is as follows. Produces ATP from ADP in the presence of a proton gradient across the membrane. The gamma chain is believed to be important in regulating ATPase activity and the flow of protons through the CF(0) complex. This chain is ATP synthase gamma chain, found in Vibrio vulnificus (strain CMCP6).